Consider the following 111-residue polypeptide: Disintegrin subunit alpha (111 aa).

A signal peptide spans 1–20 (MIQVLLVTICLAVFPYQGSS). Residues 21–44 (IILESGNVNDYEVVYPRKITPLPK) constitute a propeptide that is removed on maturation. The Disintegrin domain maps to 45-111 (GAVQPKNPCC…GDCPRKHFYA (67 aa)). Intrachain disulfides connect C53–C76, C67–C73, C72–C97, and C85–C104. The Cell attachment site signature appears at 89–91 (RGD). The propeptide occupies 110 to 111 (YA).

The protein belongs to the disintegrin family. Dimeric disintegrin subfamily. As to quaternary structure, heterodimer with subunit beta; disulfide-linked. Expressed by the venom gland.

The protein resides in the secreted. Functionally, acts by binding to alpha-IIb/beta-3 (ITGA2B/ITGB3) on the platelet surface and inhibits both ADP-induced platelet aggregation and platelet aggregate dissociation in human platelet-rich plasma. The polypeptide is Disintegrin subunit alpha (Agkistrodon piscivorus leucostoma (Western cottonmouth)).